The chain runs to 513 residues: ATP synthase subunit alpha (513 aa).

An ATP-binding site is contributed by 169-176 (GDRQTGKT).

It belongs to the ATPase alpha/beta chains family. As to quaternary structure, F-type ATPases have 2 components, CF(1) - the catalytic core - and CF(0) - the membrane proton channel. CF(1) has five subunits: alpha(3), beta(3), gamma(1), delta(1), epsilon(1). CF(0) has three main subunits: a(1), b(2) and c(9-12). The alpha and beta chains form an alternating ring which encloses part of the gamma chain. CF(1) is attached to CF(0) by a central stalk formed by the gamma and epsilon chains, while a peripheral stalk is formed by the delta and b chains.

It is found in the cell inner membrane. The enzyme catalyses ATP + H2O + 4 H(+)(in) = ADP + phosphate + 5 H(+)(out). Functionally, produces ATP from ADP in the presence of a proton gradient across the membrane. The alpha chain is a regulatory subunit. This chain is ATP synthase subunit alpha, found in Methylobacillus flagellatus (strain ATCC 51484 / DSM 6875 / VKM B-1610 / KT).